The following is a 691-amino-acid chain: Serotransferrin-2 (691 aa).

Residues 1–18 (MKLLLLSALLGCLATAYA) form the signal peptide. Transferrin-like domains are found at residues 25-329 (VKWC…SLKK) and 340-670 (IKWC…SLRK). Cysteine 28 and cysteine 50 are joined by a disulfide. The Fe(3+) site is built by aspartate 74 and tyrosine 104. Intrachain disulfides connect cysteine 127-cysteine 207, cysteine 172-cysteine 186, and cysteine 235-cysteine 249. Residues threonine 129, serine 134, glycine 136, and tryptophan 137 each coordinate hydrogencarbonate. Asparagine 169 carries N-linked (GlcNAc...) asparagine glycosylation. Tyrosine 201 contacts Fe(3+). A Fe(3+)-binding site is contributed by histidine 257. Intrachain disulfides connect cysteine 343/cysteine 379 and cysteine 353/cysteine 370. Fe(3+) is bound by residues aspartate 394 and tyrosine 428. 7 disulfide bridges follow: cysteine 404–cysteine 682, cysteine 419–cysteine 643, cysteine 451–cysteine 530, cysteine 475–cysteine 671, cysteine 485–cysteine 499, cysteine 496–cysteine 513, and cysteine 570–cysteine 584. Hydrogencarbonate is bound by residues threonine 453, arginine 457, alanine 459, and glycine 460. Tyrosine 524 is a binding site for Fe(3+). Histidine 592 is a Fe(3+) binding site.

The protein belongs to the transferrin family. Monomer. As to expression, abundant in liver and serum with smaller amounts found in the stomach and kidney.

It is found in the secreted. Functionally, transferrins are iron binding transport proteins which can bind two Fe(3+) ions in association with the binding of an anion, usually bicarbonate. It is responsible for the transport of iron from sites of absorption and heme degradation to those of storage and utilization. Serum transferrin may also have a further role in stimulating cell proliferation. This is Serotransferrin-2 (tf2) from Salmo salar (Atlantic salmon).